The primary structure comprises 72 residues: Large ribosomal subunit protein bL31 (72 aa).

The Zn(2+) site is built by cysteine 17, cysteine 19, cysteine 37, and cysteine 40.

The protein belongs to the bacterial ribosomal protein bL31 family. Type A subfamily. Part of the 50S ribosomal subunit. Requires Zn(2+) as cofactor.

Binds the 23S rRNA. This chain is Large ribosomal subunit protein bL31, found in Clostridium botulinum (strain ATCC 19397 / Type A).